A 636-amino-acid polypeptide reads, in one-letter code: Chaperone protein HtpG (636 aa).

The segment at 1 to 349 is a; substrate-binding; the sequence is MAKHQFQTEV…SEDLPLNVSR (349 aa). Positions 350 to 562 are b; that stretch reads EILQENRILA…ADAQMAAMAH (213 aa). A c region spans residues 563-636; that stretch reads MFRAMGQAMP…RLSRITAKAL (74 aa).

Belongs to the heat shock protein 90 family. In terms of assembly, homodimer.

The protein localises to the cytoplasm. Its function is as follows. Molecular chaperone. Has ATPase activity. The sequence is that of Chaperone protein HtpG from Aliarcobacter butzleri (strain RM4018) (Arcobacter butzleri).